A 327-amino-acid polypeptide reads, in one-letter code: Peroxidase 15 (327 aa).

An N-terminal signal peptide occupies residues 1-23 (MASFSPLLAMALAIFIFSSHSNA). Residue glutamine 24 is modified to Pyrrolidone carboxylic acid. Cystine bridges form between cysteine 34–cysteine 115, cysteine 67–cysteine 72, cysteine 121–cysteine 323, and cysteine 200–cysteine 232. An N-linked (GlcNAc...) asparagine glycan is attached at asparagine 36. Residue histidine 65 is the Proton acceptor of the active site. Ca(2+) contacts are provided by aspartate 66, valine 69, glycine 71, aspartate 73, and serine 75. 3 N-linked (GlcNAc...) asparagine glycosylation sites follow: asparagine 81, asparagine 96, and asparagine 159. Proline 163 is a binding site for substrate. N-linked (GlcNAc...) asparagine glycans are attached at residues asparagine 168 and asparagine 171. Position 193 (histidine 193) interacts with heme b. Ca(2+) is bound at residue threonine 194. N-linked (GlcNAc...) asparagine glycans are attached at residues asparagine 209 and asparagine 221. The Ca(2+) site is built by aspartate 245, threonine 248, and aspartate 253. 2 N-linked (GlcNAc...) asparagine glycosylation sites follow: asparagine 287 and asparagine 291.

It belongs to the peroxidase family. Classical plant (class III) peroxidase subfamily. Ca(2+) serves as cofactor. Heme b is required as a cofactor.

It localises to the secreted. The enzyme catalyses 2 a phenolic donor + H2O2 = 2 a phenolic radical donor + 2 H2O. Its function is as follows. Removal of H(2)O(2), oxidation of toxic reductants, biosynthesis and degradation of lignin, suberization, auxin catabolism, response to environmental stresses such as wounding, pathogen attack and oxidative stress. These functions might be dependent on each isozyme/isoform in each plant tissue. The sequence is that of Peroxidase 15 from Ipomoea batatas (Sweet potato).